The sequence spans 274 residues: NADPH-dependent 7-cyano-7-deazaguanine reductase (274 aa).

80 to 82 (VES) lines the substrate pocket. 82-83 (SK) serves as a coordination point for NADPH. Catalysis depends on cysteine 181, which acts as the Thioimide intermediate. Residue aspartate 188 is the Proton donor of the active site. 220 to 221 (HE) contacts substrate. An NADPH-binding site is contributed by 249 to 250 (RG).

Belongs to the GTP cyclohydrolase I family. QueF type 2 subfamily. As to quaternary structure, homodimer.

Its subcellular location is the cytoplasm. It catalyses the reaction 7-aminomethyl-7-carbaguanine + 2 NADP(+) = 7-cyano-7-deazaguanine + 2 NADPH + 3 H(+). It functions in the pathway tRNA modification; tRNA-queuosine biosynthesis. In terms of biological role, catalyzes the NADPH-dependent reduction of 7-cyano-7-deazaguanine (preQ0) to 7-aminomethyl-7-deazaguanine (preQ1). In Burkholderia pseudomallei (strain 1710b), this protein is NADPH-dependent 7-cyano-7-deazaguanine reductase.